A 389-amino-acid polypeptide reads, in one-letter code: Chalcone synthase 4-1 (389 aa).

Cys-164 is an active-site residue.

This sequence belongs to the thiolase-like superfamily. Chalcone/stilbene synthases family.

The catalysed reaction is (E)-4-coumaroyl-CoA + 3 malonyl-CoA + 3 H(+) = 2',4,4',6'-tetrahydroxychalcone + 3 CO2 + 4 CoA. It functions in the pathway secondary metabolite biosynthesis; flavonoid biosynthesis. The primary product of this enzyme is 4,2',4',6'-tetrahydroxychalcone (also termed naringenin-chalcone or chalcone) which can under specific conditions spontaneously isomerize into naringenin. This is Chalcone synthase 4-1 (CHS4-1) from Medicago sativa (Alfalfa).